Reading from the N-terminus, the 210-residue chain is MPYTSVSTYARALSGNKLPHVAAGDYENKLSTKIMKGILYVLTAGLAYGFTRVIEHYCNVTPKVAEFCANAGNIHNHLADAVRDGLFTIDVELSDGRMLTFEQLSLIAEGKPIVRISDGEHTVEVEGTFEEICMRLEEGFFEAPAYYDYDIDEKYKTVRERMAAYNALPQALGAIPCLEYYIARASNMQEAKAQWAADIKARYHNYLDNY.

The protein localises to the secreted. Its subcellular location is the host cytoplasm. Functionally, effector proteins function to alter host cell physiology and promote bacterial survival in host tissues. Could be required for passage of bacteria from the peritoneal cavity into the spleen, for survival and replication within host cells, or for avoiding host immune response. The protein is Secreted effector protein SteA (steA) of Salmonella typhimurium (strain 14028s / SGSC 2262).